A 146-amino-acid polypeptide reads, in one-letter code: MTKVYAHSIQQERVVDRIALLERCLDLSNSLPTAKRLAAVAVATILAIALLVVAGLLFSGVLCSPVSVVAASLFFGVGAFLLGGALVGGVLTTEAVTRERLHRSQTLMWNNLCCKTAEVEQKISTASANAKSNDKLENSVSKKGAS.

2 helical membrane passes run 38–58 (AAVA…GLLF) and 68–88 (VVAA…ALVG).

The protein localises to the secreted. The protein resides in the host vacuole. It is found in the host pathogen-containing vacuole. Its subcellular location is the host pathogen-containing vacuole membrane. Its function is as follows. Host inclusion membrane protein probably involved in early modification events of the chlamydial inclusion. The chain is Inclusion membrane protein D from Chlamydia trachomatis serovar L2 (strain ATCC VR-902B / DSM 19102 / 434/Bu).